Reading from the N-terminus, the 352-residue chain is Protein-glutamate methylesterase/protein-glutamine glutaminase (352 aa).

One can recognise a Response regulatory domain in the interval 5 to 122; it reads RAIVIDDSAF…SLDIRNVEDE (118 aa). D56 bears the 4-aspartylphosphate mark. The CheB-type methylesterase domain occupies 163-352; it reads RSIVSIGTST…IPSLIVKQLT (190 aa). Active-site residues include S171, H198, and D294.

Belongs to the CheB family. Post-translationally, phosphorylated by CheA. Phosphorylation of the N-terminal regulatory domain activates the methylesterase activity.

Its subcellular location is the cytoplasm. The catalysed reaction is [protein]-L-glutamate 5-O-methyl ester + H2O = L-glutamyl-[protein] + methanol + H(+). It catalyses the reaction L-glutaminyl-[protein] + H2O = L-glutamyl-[protein] + NH4(+). Involved in chemotaxis. Part of a chemotaxis signal transduction system that modulates chemotaxis in response to various stimuli. Catalyzes the demethylation of specific methylglutamate residues introduced into the chemoreceptors (methyl-accepting chemotaxis proteins or MCP) by CheR. Also mediates the irreversible deamidation of specific glutamine residues to glutamic acid. The sequence is that of Protein-glutamate methylesterase/protein-glutamine glutaminase from Oceanobacillus iheyensis (strain DSM 14371 / CIP 107618 / JCM 11309 / KCTC 3954 / HTE831).